The chain runs to 315 residues: MGLTDGVFLIVCGAQFTLGILXNGFIGLVNGRSWFKTKRMSLSDFIIATLALSRIILLCIILTDSFLIVFSVKEHDSGIIMQLIDVFWTFTNHLSIWFATCLGVLYCLKIASFSHPTFLWLKWRVSRVMVWMLLGALLLSCGSTASLINEFKLYSVLRGIEATRNVTEHFRKKRNEYYLIHVLGTLWYLPPLVVSLASYFLLIFSLGRHTRQMLQNSTSSRDPSTEAHKRAIRIILSFFFLFLLYFLAFLIASFGNFLPETKMAKMIGEVMTMFYPAGHSFIVILGNSKLKQTFVEMLRCESGHLKPGSKGPIFS.

The Extracellular portion of the chain corresponds to 1 to 5; sequence MGLTD. Residues 6 to 26 form a helical membrane-spanning segment; the sequence is GVFLIVCGAQFTLGILXNGFI. Topologically, residues 27-41 are cytoplasmic; sequence GLVNGRSWFKTKRMS. The helical transmembrane segment at 42–62 threads the bilayer; that stretch reads LSDFIIATLALSRIILLCIIL. Residues 63 to 93 lie on the Extracellular side of the membrane; that stretch reads TDSFLIVFSVKEHDSGIIMQLIDVFWTFTNH. The helical transmembrane segment at 94–114 threads the bilayer; sequence LSIWFATCLGVLYCLKIASFS. Over 115–127 the chain is Cytoplasmic; sequence HPTFLWLKWRVSR. Residues 128–148 form a helical membrane-spanning segment; that stretch reads VMVWMLLGALLLSCGSTASLI. Residues 149–185 lie on the Extracellular side of the membrane; that stretch reads NEFKLYSVLRGIEATRNVTEHFRKKRNEYYLIHVLGT. An N-linked (GlcNAc...) asparagine glycan is attached at Asn165. A helical transmembrane segment spans residues 186-206; that stretch reads LWYLPPLVVSLASYFLLIFSL. At 207 to 233 the chain is on the cytoplasmic side; that stretch reads GRHTRQMLQNSTSSRDPSTEAHKRAIR. Residues 234–254 form a helical membrane-spanning segment; that stretch reads IILSFFFLFLLYFLAFLIASF. The Extracellular portion of the chain corresponds to 255 to 265; that stretch reads GNFLPETKMAK. The chain crosses the membrane as a helical span at residues 266-286; sequence MIGEVMTMFYPAGHSFIVILG. The Cytoplasmic segment spans residues 287-315; sequence NSKLKQTFVEMLRCESGHLKPGSKGPIFS.

It belongs to the G-protein coupled receptor T2R family.

It localises to the membrane. In terms of biological role, gustducin-coupled receptor implicated in the perception of bitter compounds in the oral cavity and the gastrointestinal tract. Signals through PLCB2 and the calcium-regulated cation channel TRPM5. The protein is Taste receptor type 2 member 3 (TAS2R3) of Papio hamadryas (Hamadryas baboon).